The chain runs to 149 residues: UPF0178 protein CPR_2251 (149 aa).

This sequence belongs to the UPF0178 family.

The protein is UPF0178 protein CPR_2251 of Clostridium perfringens (strain SM101 / Type A).